We begin with the raw amino-acid sequence, 296 residues long: 4-hydroxybenzoate octaprenyltransferase (296 aa).

The next 9 membrane-spanning stretches (helical) occupy residues 28 to 48 (PIGI…AGKG), 52 to 72 (LNTV…GCVI), 102 to 122 (ALVL…FTNS), 123 to 140 (TTIW…CYPF), 146 to 166 (YYPQ…AFTA), 169 to 189 (GELP…TVGY), 219 to 239 (VIIL…GSRF), 241 to 261 (LGAF…WEFW), and 275 to 295 (FLHN…DYAL).

Belongs to the UbiA prenyltransferase family. The cofactor is Mg(2+).

The protein resides in the cell inner membrane. The enzyme catalyses all-trans-octaprenyl diphosphate + 4-hydroxybenzoate = 4-hydroxy-3-(all-trans-octaprenyl)benzoate + diphosphate. Its pathway is cofactor biosynthesis; ubiquinone biosynthesis. Functionally, catalyzes the prenylation of para-hydroxybenzoate (PHB) with an all-trans polyprenyl group. Mediates the second step in the final reaction sequence of ubiquinone-8 (UQ-8) biosynthesis, which is the condensation of the polyisoprenoid side chain with PHB, generating the first membrane-bound Q intermediate 3-octaprenyl-4-hydroxybenzoate. The sequence is that of 4-hydroxybenzoate octaprenyltransferase from Pseudomonas syringae pv. tomato (strain ATCC BAA-871 / DC3000).